Reading from the N-terminus, the 99-residue chain is Bacterial microcompartment protein homohexamer (99 aa).

Residues 4-88 (ALGMIEVRGF…PHVNVDAALP (85 aa)) enclose the BMC domain.

This sequence belongs to the bacterial microcompartments protein family. In terms of assembly, homohexamer with a small central pore. When purified protein is examined by atomic force microscopy it dynamically makes uniform patches about 35 Angstroms thick with hexamers in the same orientation. In the BMC the concave side faces outward, with the N- and C-terminii exposed to the cytoplasm.

The protein resides in the bacterial microcompartment. Its function is as follows. The only hexameric shell protein in this bacterium, it forms the majority of the bacterial microcompartment (BMC) shell. Expression of 5 proteins in E.coli (BMC-H (Hoch_5815), BMC-P (Hoch_5814), and 3 BMC-T (Hoch_5812, Hoch_5816, Hoch_3341)) forms a 40 nm artificial BMC with a molecular mass of 6.5 MDa. There are 60 BMC-H hexamers per BMC. The shell facets are 20-30 Angstroms thick (a single hexamer layer), with 1 of BMC-T trimers protruding to the exterior. In Haliangium ochraceum (strain DSM 14365 / JCM 11303 / SMP-2), this protein is Bacterial microcompartment protein homohexamer.